The sequence spans 611 residues: Oligoendopeptidase F homolog (611 aa).

Histidine 384 serves as a coordination point for Zn(2+). Glutamate 385 is an active-site residue. The Zn(2+) site is built by histidine 388 and histidine 391.

Belongs to the peptidase M3B family. It depends on Zn(2+) as a cofactor.

The sequence is that of Oligoendopeptidase F homolog (pepF) from Mycoplasma pneumoniae (strain ATCC 29342 / M129 / Subtype 1) (Mycoplasmoides pneumoniae).